The sequence spans 665 residues: Ion-translocating oxidoreductase complex subunit C (665 aa).

2 4Fe-4S ferredoxin-type domains span residues 368–398 and 408–437; these read EYAE…QQLY and KSEE…IQYF. Residues Cys378, Cys381, Cys384, Cys388, Cys417, Cys420, Cys423, and Cys427 each contribute to the [4Fe-4S] cluster site. 2 stretches are compositionally biased toward basic and acidic residues: residues 465–477 and 485–513; these read QARM…ERKA and ARRE…KANE. Disordered regions lie at residues 465-568, 580-623, and 637-665; these read QARM…DAKK, AKKL…LDPK, and KKLA…QIVR. Composition is skewed to polar residues over residues 554–564 and 585–600; these read VENQEQQTQPT and QTNS…QTAE. Over residues 602–615 the composition is skewed to basic and acidic residues; that stretch reads EVEKTKSAVEKTEE. Polar residues predominate over residues 643-656; the sequence is NSTSEAISNSQTAE.

This sequence belongs to the 4Fe4S bacterial-type ferredoxin family. RnfC subfamily. In terms of assembly, the complex is composed of six subunits: RnfA, RnfB, RnfC, RnfD, RnfE and RnfG. [4Fe-4S] cluster serves as cofactor.

The protein localises to the cell inner membrane. Part of a membrane-bound complex that couples electron transfer with translocation of ions across the membrane. The protein is Ion-translocating oxidoreductase complex subunit C of Haemophilus influenzae (strain 86-028NP).